Consider the following 303-residue polypeptide: Foldase protein PrsA (303 aa).

A signal peptide spans 1–20 (MMKKWLLAAASLLMVVTLAG). Cysteine 21 carries the N-palmitoyl cysteine lipid modification. Cysteine 21 is lipidated: S-diacylglycerol cysteine. Residues 137-233 (EPKVEVQHIL…YGYHVIRMIK (97 aa)) form the PpiC domain.

The protein belongs to the PrsA family.

It is found in the cell membrane. The enzyme catalyses [protein]-peptidylproline (omega=180) = [protein]-peptidylproline (omega=0). Its function is as follows. Plays a major role in protein secretion by helping the post-translocational extracellular folding of several secreted proteins. The protein is Foldase protein PrsA of Latilactobacillus sakei subsp. sakei (strain 23K) (Lactobacillus sakei subsp. sakei).